The chain runs to 353 residues: Uroporphyrinogen decarboxylase (353 aa).

Substrate is bound by residues 25–29, aspartate 74, tyrosine 151, serine 206, and histidine 325; that span reads RQAGR.

Belongs to the uroporphyrinogen decarboxylase family. In terms of assembly, homodimer.

The protein resides in the cytoplasm. It catalyses the reaction uroporphyrinogen III + 4 H(+) = coproporphyrinogen III + 4 CO2. It functions in the pathway porphyrin-containing compound metabolism; protoporphyrin-IX biosynthesis; coproporphyrinogen-III from 5-aminolevulinate: step 4/4. Catalyzes the decarboxylation of four acetate groups of uroporphyrinogen-III to yield coproporphyrinogen-III. The chain is Uroporphyrinogen decarboxylase from Chloroherpeton thalassium (strain ATCC 35110 / GB-78).